A 297-amino-acid polypeptide reads, in one-letter code: Adrenocorticotropic hormone receptor (297 aa).

The Extracellular portion of the chain corresponds to 1-23 (MKHIINSYENINNTARNNSDCPR). N-linked (GlcNAc...) asparagine glycans are attached at residues Asn12 and Asn17. Disulfide bonds link Cys21/Cys253 and Cys245/Cys251. A helical transmembrane segment spans residues 24 to 49 (VVLPEEIFFTISIVGVLENLIVLLAV). The Cytoplasmic portion of the chain corresponds to 50 to 58 (FKNKNLQAP). Residues 59–79 (MYFFICSLAISDMLGSLYKIL) traverse the membrane as a helical segment. The Extracellular segment spans residues 80-104 (ENILIILRNMGYLKPRGSFETTADD). The helical transmembrane segment at 105-126 (IIDSLFVLSLLGSIFSLSVIAA) threads the bilayer. Residues 127-147 (DRYITIFHALRYHSIVTMRRT) lie on the Cytoplasmic side of the membrane. The helical transmembrane segment at 148 to 168 (VVVLTVIWTFCTGTGITMVIF) threads the bilayer. Residues 169–180 (SHHVPTVITFTS) lie on the Extracellular side of the membrane. Residues 181-199 (LFPLMLVFILCLYVHMFLL) form a helical membrane-spanning segment. Topologically, residues 200–217 (ARSHTRKISTLPRANMKG) are cytoplasmic. Residues 218–244 (AITLTILLGVFIFCWAPFVLHVLLMTF) traverse the membrane as a helical segment. The Extracellular portion of the chain corresponds to 245–256 (CPSNPYCACYMS). The chain crosses the membrane as a helical span at residues 257–278 (LFQVNGMLIMCNAVIDPFIYAF). The Cytoplasmic portion of the chain corresponds to 279 to 297 (RSPELRDAFKKMIFCSRYW). Residue Cys293 is the site of S-palmitoyl cysteine attachment.

The protein belongs to the G-protein coupled receptor 1 family. As to quaternary structure, homodimer. Interacts with corticotropin (ACTH). Interacts with MRAP; this interaction targets MC2R to the plasma membrane. Interacts with MRAP2; competing with MRAP for binding to MC2R and impairing the binding of corticotropin (ACTH). In terms of processing, ubiquitinated by MGRN1 that may be involved in post-endocytic trafficking and/or degradation of internalized receptor. In terms of tissue distribution, melanocytes and corticoadrenal tissue.

Its subcellular location is the cell membrane. Hormone receptor primarily expressed in adrenal cortex that plays a key role in regulating adrenocortical function. Upon corticotropin (ACTH) binding, facilitates the release of adrenal glucocorticoids, including cortisol and corticosterone. In addition, MC2R is required for fetal and neonatal adrenal gland development. Mechanistically, activates adenylate cyclase (cAMP), the MAPK cascade as well as the cAMP-dependent protein kinase A pathway leading to steroidogenic factor 1/NR5A1-mediated transcriptional activation. This is Adrenocorticotropic hormone receptor (MC2R) from Homo sapiens (Human).